A 338-amino-acid polypeptide reads, in one-letter code: Cytoskeleton protein RodZ (338 aa).

The Cytoplasmic portion of the chain corresponds to 1 to 111 (MNTEASQDQT…LGKKHKKRDG (111 aa)). The region spanning 19-79 (LRQAREALGL…KLVHLPEDEL (61 aa)) is the HTH cro/C1-type domain. The segment at residues 30–49 (QQMVAERLCLKVSTIRDIEE) is a DNA-binding region (H-T-H motif). Residues 112–132 (WLMSFTWLIVLVVLGLTGAWW) form a helical; Signal-anchor for type II membrane protein membrane-spanning segment. Residues 133 to 338 (WQNHQAQQAE…RVARLTVGVE (206 aa)) are Periplasmic-facing. Polar residues-rich tracts occupy residues 151–163 (SAQL…QSVP) and 180–195 (PVAN…NGTV). The interval 151–253 (SAQLSQNGGQ…LPTADAGVTG (103 aa)) is disordered. Residues 196–209 (PATSSAAPADTANN) are compositionally biased toward low complexity. Residues 210–241 (GVNTTAPQGTTSAESAVVSPSQAPLPSVSTAQ) are compositionally biased toward polar residues.

The protein belongs to the RodZ family.

It localises to the cell inner membrane. In terms of biological role, cytoskeletal protein that is involved in cell-shape control through regulation of the length of the long axis. This is Cytoskeleton protein RodZ from Yersinia enterocolitica serotype O:8 / biotype 1B (strain NCTC 13174 / 8081).